An 818-amino-acid polypeptide reads, in one-letter code: Protocadherin beta-1 (818 aa).

Positions 1 to 28 (MAGTRRKSLQNRQVGSLLIFLCISVGDA) are cleaved as a signal peptide. Over 29–691 (TTIRYSVAEE…RKVNPSTKYL (663 aa)) the chain is Extracellular. Cadherin domains follow at residues 35–133 (VAEE…APVF), 138–242 (PLLK…VPQF), 243–347 (SRLV…PPEV), 348–452 (MVSS…PPIF), and 457–562 (YILT…RPMI). Residues Asn-169, Asn-209, Asn-257, and Asn-419 are each glycosylated (N-linked (GlcNAc...) asparagine). Residue Asn-568 is glycosylated (N-linked (GlcNAc...) asparagine). The Cadherin 6 domain maps to 577–672 (VPRSAEAGYL…LVDGFSEPYL (96 aa)). Residues 692–712 (VISLVILSFLFLLSVIVIFII) form a helical membrane-spanning segment. The Cytoplasmic segment spans residues 713-818 (HVYQKIKYRE…GHDQVSDDYM (106 aa)). Positions 789-818 (MEAGSSLPPNSDRNKSQRLEGHDQVSDDYM) are disordered. Residues 800–818 (DRNKSQRLEGHDQVSDDYM) are compositionally biased toward basic and acidic residues.

It is found in the cell membrane. In terms of biological role, potential calcium-dependent cell-adhesion protein. May be involved in the establishment and maintenance of specific neuronal connections in the brain. The chain is Protocadherin beta-1 (PCDHB1) from Homo sapiens (Human).